The following is a 671-amino-acid chain: MGQVHLHNRSFNKATSAGFLIALGIVYGDIGTSPLYAMQAIVRGQGGLANLSESFILGAVSLVIWTLTLITTVKYVLIALKADNHHEGGIFSLFTLVRRMRKWLIVPAMIGGATLLADGALTPAVTVTSAIEGLRGVTHVYSNQTTVMVTTLIILAFLFLIQRFGASLVGRLFGPIMFIWFGFLGVSGLINSFLDLSILKAINPYYAIHLLFSPENKAGFFILGSIFLVTTGAEALYSDLGHVGRGNIYVSWPFVKICIILSYCGQGAWLLAHRGEHIEKLNPFFAVLPDNMVIYVVILSTLAAIIASQALISGSFTLVSEAIRLKLLPLFKIYYPGQTLGQLYIPAVNFALWVTTSFFVLYFKTSEHMEAAYSLAITITMLMTTTLLTYFLIQKGMPKIAIAFISIGLFCIEGSFFAASLVQFINGAYIVVLIALAIIFVMFIWNKSHKIVMKYIKSLNINEYKNQLNALRHDESYDLYQTNVVYLTSKMDHEWIDRSILYSILDKRPKRAECYWFVNVKVTDEPYTSEYKVDMMDTDFIVRVNLYLGFRMRQEVPRYLRTIVTDLMESGRLPRQHQHYSITPGRKVGDFRFVVVEEKLMNARQMPGFERFVLQTKAQIKRITASPIRWFGLQFSEVTVETVPLVLSDVRNLEIHERLEQVDETEAPATN.

The next 12 membrane-spanning stretches (helical) occupy residues 18–38 (GFLI…LYAM), 60–80 (VSLV…LIAL), 103–123 (WLIV…ALTP), 149–169 (VTTL…ASLV), 173–193 (FGPI…INSF), 218–238 (AGFF…ALYS), 252–272 (WPFV…WLLA), 292–312 (MVIY…QALI), 343–363 (LYIP…VLYF), 373–393 (YSLA…YFLI), 402–422 (IAFI…ASLV), and 424–444 (FING…VMFI).

It belongs to the HAK/KUP transporter (TC 2.A.72) family.

It is found in the cell membrane. The catalysed reaction is K(+)(in) + H(+)(in) = K(+)(out) + H(+)(out). Transport of potassium into the cell. Likely operates as a K(+):H(+) symporter. This is Probable potassium transport system protein Kup 2 from Lactococcus lactis subsp. cremoris (strain SK11).